The chain runs to 236 residues: HTH-type transcriptional regulator SACE_5812 (236 aa).

The HTH tetR-type domain occupies 30–90 (LLTQDKIVSA…LALDAVFGEV (61 aa)). Residues 53 to 72 (SMRKLADRLQAHATSLYWHV) constitute a DNA-binding region (H-T-H motif).

Its function is as follows. Transcriptional regulator that inhibits erythromycin production. Directly represses the expression of SACE_5813, eryAI (encoding polyketide synthase I) and ermE (encoding rRNA methyltransferase), suggesting its direct regulation of the erythromycin biosynthesis gene cluster. May play an important role in regulating secondary metabolism in actinomycetes. The polypeptide is HTH-type transcriptional regulator SACE_5812 (Saccharopolyspora erythraea (strain ATCC 11635 / DSM 40517 / JCM 4748 / NBRC 13426 / NCIMB 8594 / NRRL 2338)).